Consider the following 126-residue polypeptide: Aspartate 1-decarboxylase (126 aa).

The active-site Schiff-base intermediate with substrate; via pyruvic acid is the S25. Residue S25 is modified to Pyruvic acid (Ser). Residue T57 coordinates substrate. Y58 serves as the catalytic Proton donor. 73–75 (GAA) provides a ligand contact to substrate.

This sequence belongs to the PanD family. Heterooctamer of four alpha and four beta subunits. It depends on pyruvate as a cofactor. Is synthesized initially as an inactive proenzyme, which is activated by self-cleavage at a specific serine bond to produce a beta-subunit with a hydroxyl group at its C-terminus and an alpha-subunit with a pyruvoyl group at its N-terminus.

The protein resides in the cytoplasm. It catalyses the reaction L-aspartate + H(+) = beta-alanine + CO2. It functions in the pathway cofactor biosynthesis; (R)-pantothenate biosynthesis; beta-alanine from L-aspartate: step 1/1. Functionally, catalyzes the pyruvoyl-dependent decarboxylation of aspartate to produce beta-alanine. This chain is Aspartate 1-decarboxylase, found in Edwardsiella ictaluri (strain 93-146).